Reading from the N-terminus, the 74-residue chain is Cytochrome c oxidase copper chaperone 1 (74 aa).

Residues 1–30 (MTDQPAQNGLIPPPTSEPSKAAASAETKPK) are disordered. Residues C34 and C35 each coordinate Cu cation. The CHCH domain maps to 34-74 (CCACPDTKKLRDECIVEHGESACTKWIEAHKICLRAEGFNV). 2 short sequence motifs (cx9C motif) span residues 37-47 (CPDTKKLRDEC) and 56-66 (CTKWIEAHKIC). Intrachain disulfides connect C37/C66 and C47/C56.

This sequence belongs to the COX17 family.

The protein resides in the mitochondrion intermembrane space. Copper chaperone for cytochrome c oxidase (COX). Binds 2 copper ions and delivers them to the Cu(A) site of COX. Can complement the yeast mutant cox17. This chain is Cytochrome c oxidase copper chaperone 1 (COX17-1), found in Arabidopsis thaliana (Mouse-ear cress).